We begin with the raw amino-acid sequence, 339 residues long: DNA-directed RNA polymerase subunit alpha (339 aa).

The interval 1-235 (MTIQKNWQEL…DQLNVFVNFE (235 aa)) is alpha N-terminal domain (alpha-NTD). The segment at 251–339 (FNPAFLKKVD…ELAKRFEDHY (89 aa)) is alpha C-terminal domain (alpha-CTD).

It belongs to the RNA polymerase alpha chain family. Homodimer. The RNAP catalytic core consists of 2 alpha, 1 beta, 1 beta' and 1 omega subunit. When a sigma factor is associated with the core the holoenzyme is formed, which can initiate transcription.

The catalysed reaction is RNA(n) + a ribonucleoside 5'-triphosphate = RNA(n+1) + diphosphate. DNA-dependent RNA polymerase catalyzes the transcription of DNA into RNA using the four ribonucleoside triphosphates as substrates. The chain is DNA-directed RNA polymerase subunit alpha from Rhodopseudomonas palustris (strain ATCC BAA-98 / CGA009).